The sequence spans 268 residues: MDRYQALFAQLEKKNQGAFVPFVTIGDPNPELSYDIMETLIEAGADALELGIPFSDPLADGPTIQGANIRALDSKTTPAICFELITKIRSKYPDTPIGLLVYANLVFANGIDNFYTKCQQAGVDSVLIADVPTNESQEFRESAIEHGIHPIFIAPPSASPETLETVAKLGGGYTYLLSRAGVTGAETKAGMPVAQLLERLNQYDAPPAILGFGISEPAQVEEAVKAGAAGAISGSATVKLIEQHQANPEALLKALADFTSSMKAATQK.

Residues Glu49 and Asp60 each act as proton acceptor in the active site.

The protein belongs to the TrpA family. Tetramer of two alpha and two beta chains.

The enzyme catalyses (1S,2R)-1-C-(indol-3-yl)glycerol 3-phosphate + L-serine = D-glyceraldehyde 3-phosphate + L-tryptophan + H2O. Its pathway is amino-acid biosynthesis; L-tryptophan biosynthesis; L-tryptophan from chorismate: step 5/5. The alpha subunit is responsible for the aldol cleavage of indoleglycerol phosphate to indole and glyceraldehyde 3-phosphate. This Aliivibrio fischeri (strain ATCC 700601 / ES114) (Vibrio fischeri) protein is Tryptophan synthase alpha chain.